A 223-amino-acid chain; its full sequence is GTP cyclohydrolase 1 (223 aa).

Positions 114, 117, and 185 each coordinate Zn(2+).

It belongs to the GTP cyclohydrolase I family. In terms of assembly, homomer.

It catalyses the reaction GTP + H2O = 7,8-dihydroneopterin 3'-triphosphate + formate + H(+). It participates in cofactor biosynthesis; 7,8-dihydroneopterin triphosphate biosynthesis; 7,8-dihydroneopterin triphosphate from GTP: step 1/1. This Chlorobium phaeovibrioides (strain DSM 265 / 1930) (Prosthecochloris vibrioformis (strain DSM 265)) protein is GTP cyclohydrolase 1.